Consider the following 313-residue polypeptide: E3 ubiquitin-protein ligase siah2 (313 aa).

The segment at 1-49 (MSRPSSAGPCASKPCGKQKQPPPPPPHAPSLPATISGGPGASAPPAPTA) is disordered. Over residues 20-29 (QPPPPPPHAP) the composition is skewed to pro residues. The RING-type zinc-finger motif lies at 69–104 (CPVCFDYVLPPILQCQAGHLVCNQCRQKLSCCPTCR). An SBD region spans residues 119–311 (VASAVLFPCK…LGINVTISTC (193 aa)). The SIAH-type zinc finger occupies 122–182 (AVLFPCKYAS…VMQHLTHSHK (61 aa)). Zn(2+) contacts are provided by Cys-127, Cys-134, His-146, Cys-150, Cys-157, Cys-164, His-176, and His-181.

Belongs to the SINA (Seven in absentia) family. As to quaternary structure, homodimer. In terms of tissue distribution, widely expressed in early embryos until stage 40. It is then expressed in brain, spinal cord and in the developing and mature eye.

It is found in the cytoplasm. The enzyme catalyses S-ubiquitinyl-[E2 ubiquitin-conjugating enzyme]-L-cysteine + [acceptor protein]-L-lysine = [E2 ubiquitin-conjugating enzyme]-L-cysteine + N(6)-ubiquitinyl-[acceptor protein]-L-lysine.. It functions in the pathway protein modification; protein ubiquitination. Its function is as follows. E3 ubiquitin-protein ligase that mediates ubiquitination and subsequent proteasomal degradation of target proteins. E3 ubiquitin ligases accept ubiquitin from an E2 ubiquitin-conjugating enzyme in the form of a thioester and then directly transfers the ubiquitin to targeted substrates. Involved in eye morphogenesis, probably triggers the ubiquitin-mediated degradation of different substrates. May play a role in the regulation of the cellular clock function. This is E3 ubiquitin-protein ligase siah2 (siah2) from Xenopus laevis (African clawed frog).